The following is an 85-amino-acid chain: Large ribosomal subunit protein bL27 (85 aa).

The protein belongs to the bacterial ribosomal protein bL27 family.

The chain is Large ribosomal subunit protein bL27 from Ruthia magnifica subsp. Calyptogena magnifica.